The chain runs to 111 residues: Probable 4-amino-4-deoxy-L-arabinose-phosphoundecaprenol flippase subunit ArnE (111 aa).

Transmembrane regions (helical) follow at residues 37–57, 65–85, and 91–111; these read LIWLGLSVIFLAGGMLLWLKL, QAYPFLSINLILVTLSGHFFF, and LQHWLGIGIMMVGILLLGQGI.

This sequence belongs to the ArnE family. Heterodimer of ArnE and ArnF.

The protein resides in the cell inner membrane. It participates in bacterial outer membrane biogenesis; lipopolysaccharide biosynthesis. Translocates 4-amino-4-deoxy-L-arabinose-phosphoundecaprenol (alpha-L-Ara4N-phosphoundecaprenol) from the cytoplasmic to the periplasmic side of the inner membrane. The polypeptide is Probable 4-amino-4-deoxy-L-arabinose-phosphoundecaprenol flippase subunit ArnE (Hamiltonella defensa subsp. Acyrthosiphon pisum (strain 5AT)).